Here is a 318-residue protein sequence, read N- to C-terminus: D-alanine--D-alanine ligase (318 aa).

The ATP-grasp domain maps to 116–315 (KQVWQSLGLP…FEQLSLAVLA (200 aa)). Residue 146 to 201 (MSRLGDLVMVKPAQEGSSIGMAKVSNAQQLAAAIQQAFEYDDKVLLEQFIQGSEYT) participates in ATP binding. 3 residues coordinate Mg(2+): Asp269, Glu282, and Asn284.

It belongs to the D-alanine--D-alanine ligase family. Requires Mg(2+) as cofactor. Mn(2+) serves as cofactor.

It localises to the cytoplasm. The enzyme catalyses 2 D-alanine + ATP = D-alanyl-D-alanine + ADP + phosphate + H(+). Its pathway is cell wall biogenesis; peptidoglycan biosynthesis. Functionally, cell wall formation. In Pseudoalteromonas atlantica (strain T6c / ATCC BAA-1087), this protein is D-alanine--D-alanine ligase.